A 341-amino-acid chain; its full sequence is Hyaluronan and proteoglycan link protein 2 (341 aa).

Positions 1-27 (MPSRIPLPAFCCFLLPWAFTSFHKALG) are cleaved as a signal peptide. An Ig-like V-type domain is found at 35–143 (PHYLLPPIHE…GIEDESVALT (109 aa)). 5 cysteine pairs are disulfide-bonded: Cys-58–Cys-129, Cys-171–Cys-241, Cys-195–Cys-216, Cys-266–Cys-337, and Cys-291–Cys-312. Link domains lie at 149-243 (VVFP…FCFT) and 246-339 (LAGQ…YCYA).

This sequence belongs to the HAPLN family. Brain. Predominantly expressed by neurons. Colocalizes with versican V2 in developing and adult cerebellar white matter and at the nodes of Ranvier.

Its subcellular location is the secreted. It is found in the extracellular space. The protein localises to the extracellular matrix. Its function is as follows. Mediates a firm binding of versican V2 to hyaluronic acid. May play a pivotal role in the formation of the hyaluronan-associated matrix in the central nervous system (CNS) which facilitates neuronal conduction and general structural stabilization. Binds to hyaluronic acid. The chain is Hyaluronan and proteoglycan link protein 2 (Hapln2) from Mus musculus (Mouse).